Reading from the N-terminus, the 135-residue chain is Large ribosomal subunit protein uL16c (135 aa).

M1 carries the post-translational modification N-methylmethionine.

Component of the chloroplast large ribosomal subunit (LSU). Mature 70S chloroplast ribosomes of higher plants consist of a small (30S) and a large (50S) subunit. The 30S small subunit contains 1 molecule of ribosomal RNA (16S rRNA) and 24 different proteins. The 50S large subunit contains 3 rRNA molecules (23S, 5S and 4.5S rRNA) and 33 different proteins. Post-translationally, partially alpha-N-monomethylated at Met-1 (10%), whereas 90% of it is blocked to Edman degradation, probably by trimethylation.

The protein resides in the plastid. The protein localises to the chloroplast. In terms of biological role, component of the chloroplast ribosome (chloro-ribosome), a dedicated translation machinery responsible for the synthesis of chloroplast genome-encoded proteins, including proteins of the transcription and translation machinery and components of the photosynthetic apparatus. This chain is Large ribosomal subunit protein uL16c, found in Spinacia oleracea (Spinach).